The primary structure comprises 343 residues: Sodium/bile acid cotransporter 7-B (343 aa).

The Cytoplasmic segment spans residues 1–9 (MGLLERLRK). Residues 10-30 (EWFIIGIILVIVAAKLEPTIG) traverse the membrane as a helical segment. Over 31–37 (EKGGPLK) the chain is Extracellular. A helical transmembrane segment spans residues 38-58 (PEITITYIAVSAIFFNSGLSL). Residues 59–71 (KTEELTNALMHVK) are Cytoplasmic-facing. A helical membrane pass occupies residues 72–92 (LHLFVQLFTLVFFPTAIWIFL). Residues 93 to 116 (QVLSLTPINEWLLKGLQTVSCMPP) lie on the Extracellular side of the membrane. A helical membrane pass occupies residues 117–137 (PVSSAVILTKAVGGNEAAAIF). Position 138 (Asn-138) is a topological domain, cytoplasmic. A helical transmembrane segment spans residues 139-159 (SAFGSFLGIVVTPLLLLLFLG). Residues 160–163 (SSSS) lie on the Extracellular side of the membrane. The helical transmembrane segment at 164–184 (VPFTSIFSQLFMTVVVPLIIG) threads the bilayer. Over 185–201 (QIVRRYIKDWLERKKPP) the chain is Cytoplasmic. The helical transmembrane segment at 202–222 (FGAISSCVLLMIIYTTFCDTF) threads the bilayer. Residues 223–234 (SNPNIDLDTFSL) are Extracellular-facing. A helical membrane pass occupies residues 235–255 (VVIVFIIFFIQLAFMLLTFLF). Residues 256–270 (STSKNSGFTPADTVA) are Cytoplasmic-facing. Residues 271 to 291 (IVFCSTHKSLTLGIPMLKIVF) traverse the membrane as a helical segment. Residues 292–298 (AGYEHLS) are Extracellular-facing. Residues 299-319 (LISVPLLIYHPAQILLGSVLV) form a helical membrane-spanning segment. Topologically, residues 320 to 343 (PTIKSWMLSRRKALKLTRQPKIPL) are cytoplasmic.

This sequence belongs to the bile acid:sodium symporter (BASS) (TC 2.A.28) family.

The protein resides in the cell membrane. The protein localises to the endoplasmic reticulum membrane. It localises to the golgi apparatus membrane. In terms of biological role, involved in teeth and skeletal development. Has an essential role in the biosynthesis and trafficking of glycosaminoglycans and glycoproteins to produce a proper functioning extracellular matrix. Required for extracellular matrix mineralization. Also involved in the regulation of cellular calcium homeostasis. Does not show transport activity towards bile acids or steroid sulfates. The chain is Sodium/bile acid cotransporter 7-B (slc10a7-b) from Xenopus laevis (African clawed frog).